Here is a 495-residue protein sequence, read N- to C-terminus: Protein adenylyltransferase Fic (495 aa).

The segment at 1–27 is disordered; sequence MGTEAEQPSPPSPPAQQQEQTNPPLWN. A helical transmembrane segment spans residues 36–55; sequence LYRLVLFFIAGSLAAWTIHA. TPR repeat units follow at residues 121–154 and 155–189; these read ALVSLRMAQDMYLAGKDDKASRLFEHALALAPRH and PEVLLRYGEFLEHSQRNIVLADQYYFQALTISPSN. Positions 246-251 match the Inhibitory (S/T)XXXE(G/N) motif motif; the sequence is SVGIEG. ATP-binding positions include E250 and 331–334; that span reads VGGH. Residues 300 to 435 form the Fido domain; it reads ITIKDILELH…IRPFVRFIAD (136 aa). Residue H378 is part of the active site. ATP contacts are provided by residues 382–389, 414–415, and N422; these read DGNGRTSR and YY.

Belongs to the fic family. In terms of assembly, homodimer.

It is found in the membrane. It catalyses the reaction L-tyrosyl-[protein] + ATP = O-(5'-adenylyl)-L-tyrosyl-[protein] + diphosphate. The enzyme catalyses L-threonyl-[protein] + ATP = 3-O-(5'-adenylyl)-L-threonyl-[protein] + diphosphate. It carries out the reaction 3-O-(5'-adenylyl)-L-threonyl-[protein] + H2O = L-threonyl-[protein] + AMP + H(+). Its activity is regulated as follows. The side chain of Glu-250 determines which of the two opposing activities (AMPylase or de-AMPylase) will take place. In response to endoplasmic reticulum stress, mediates de-AMPylase activity. Adenylyltransferase activity is inhibited by the inhibitory helix present at the N-terminus: Glu-250 binds ATP and competes with ATP-binding at Arg-389, thereby preventing adenylyltransferase activity. In unstressed cells, disengagement of Glu-250 promotes adenylyltransferase activity. Activation dissociates ATP-binding from Glu-250, allowing ordered binding of the entire ATP moiety with the alpha-phosphate in an orientation that is productive for accepting an incoming target hydroxyl side chain. Its function is as follows. Protein that can both mediate the addition of adenosine 5'-monophosphate (AMP) to specific residues of target proteins (AMPylation), and the removal of the same modification from target proteins (de-AMPylation), depending on the context. The side chain of Glu-250 determines which of the two opposing activities (AMPylase or de-AMPylase) will take place. Acts as a key regulator of the unfolded protein response (UPR) by mediating AMPylation or de-AMPylation of Hsc70-3/BiP. In unstressed cells, acts as an adenylyltransferase by mediating AMPylation of Hsc70-3/BiP at 'Thr-518', thereby inactivating it. In response to endoplasmic reticulum stress, acts as a phosphodiesterase by mediating removal of ATP (de-AMPylation) from Hsc70-3/BiP at 'Thr-518', leading to restore HSPA5/BiP activity. The sequence is that of Protein adenylyltransferase Fic from Drosophila yakuba (Fruit fly).